The following is a 557-amino-acid chain: Formate--tetrahydrofolate ligase (557 aa).

67 to 74 (TPAGEGKT) is a binding site for ATP.

The protein belongs to the formate--tetrahydrofolate ligase family.

The enzyme catalyses (6S)-5,6,7,8-tetrahydrofolate + formate + ATP = (6R)-10-formyltetrahydrofolate + ADP + phosphate. It functions in the pathway one-carbon metabolism; tetrahydrofolate interconversion. This is Formate--tetrahydrofolate ligase from Cereibacter sphaeroides (strain KD131 / KCTC 12085) (Rhodobacter sphaeroides).